The chain runs to 100 residues: Glutamyl-tRNA(Gln) amidotransferase subunit C (100 aa).

This sequence belongs to the GatC family. Heterotrimer of A, B and C subunits.

The catalysed reaction is L-glutamyl-tRNA(Gln) + L-glutamine + ATP + H2O = L-glutaminyl-tRNA(Gln) + L-glutamate + ADP + phosphate + H(+). It catalyses the reaction L-aspartyl-tRNA(Asn) + L-glutamine + ATP + H2O = L-asparaginyl-tRNA(Asn) + L-glutamate + ADP + phosphate + 2 H(+). Allows the formation of correctly charged Asn-tRNA(Asn) or Gln-tRNA(Gln) through the transamidation of misacylated Asp-tRNA(Asn) or Glu-tRNA(Gln) in organisms which lack either or both of asparaginyl-tRNA or glutaminyl-tRNA synthetases. The reaction takes place in the presence of glutamine and ATP through an activated phospho-Asp-tRNA(Asn) or phospho-Glu-tRNA(Gln). The sequence is that of Glutamyl-tRNA(Gln) amidotransferase subunit C from Rickettsia conorii (strain ATCC VR-613 / Malish 7).